The primary structure comprises 85 residues: Makatoxin-3 (85 aa).

The signal sequence occupies residues 1 to 19 (MNYLIVISFALLLMTGVES). The LCN-type CS-alpha/beta domain maps to 21–83 (RDAYIAKKEN…VPIRIPGPCI (63 aa)). 4 disulfide bridges follow: C31-C82, C35-C55, C41-C65, and C45-C67.

The protein belongs to the long (4 C-C) scorpion toxin superfamily. Sodium channel inhibitor family. Alpha subfamily. In terms of tissue distribution, expressed by the venom gland.

The protein localises to the secreted. In terms of biological role, this protein markedly relaxes the rat carbachol-precontracted anococcygeus muscle. This relaxation is inhibited by the inhibitor of nitric oxide (NO) synthase, N-nitro-L-arginine methyl ester (L-NAME), suggesting that the response induced by this protein is NO-mediated. This is Makatoxin-3 from Olivierus martensii (Manchurian scorpion).